The chain runs to 439 residues: GTPase Der (439 aa).

EngA-type G domains lie at 2 to 167 and 182 to 358; these read PTVL…ESKG and IRVS…KSLH. GTP is bound by residues 8 to 15, 55 to 59, 118 to 121, 188 to 195, 235 to 239, and 301 to 304; these read GKSNVGKS, DTGGI, NKSE, GRPNAGKS, DTAGL, and NKID. The KH-like domain occupies 359–439; the sequence is YRVQTSAVNS…PIFLKFKSRH (81 aa).

The protein belongs to the TRAFAC class TrmE-Era-EngA-EngB-Septin-like GTPase superfamily. EngA (Der) GTPase family. Associates with the 50S ribosomal subunit.

Its function is as follows. GTPase that plays an essential role in the late steps of ribosome biogenesis. The protein is GTPase Der of Thermosipho africanus (strain TCF52B).